We begin with the raw amino-acid sequence, 486 residues long: Cysteine--tRNA ligase (486 aa).

Cysteine 27 contributes to the Zn(2+) binding site. Residues 29 to 39 carry the 'HIGH' region motif; sequence PTTYNFIHLGN. Zn(2+) contacts are provided by cysteine 207, histidine 232, and glutamate 236. Positions 264 to 268 match the 'KMSKS' region motif; it reads KMSKS. Residue lysine 267 participates in ATP binding.

It belongs to the class-I aminoacyl-tRNA synthetase family. As to quaternary structure, monomer. The cofactor is Zn(2+).

Its subcellular location is the cytoplasm. The catalysed reaction is tRNA(Cys) + L-cysteine + ATP = L-cysteinyl-tRNA(Cys) + AMP + diphosphate. This is Cysteine--tRNA ligase from Desulforamulus reducens (strain ATCC BAA-1160 / DSM 100696 / MI-1) (Desulfotomaculum reducens).